Reading from the N-terminus, the 261-residue chain is Small ribosomal subunit protein eS1A (261 aa).

Residues 1–18 (MTLGKNKRISKGGKRGKK) are compositionally biased toward basic residues. Residues 1–23 (MTLGKNKRISKGGKRGKKKTQET) are disordered.

It belongs to the eukaryotic ribosomal protein eS1 family. In terms of assembly, component of the small ribosomal subunit. Mature ribosomes consist of a small (40S) and a large (60S) subunit. The 40S subunit contains about 33 different proteins and 1 molecule of RNA (18S). The 60S subunit contains about 49 different proteins and 3 molecules of RNA (25S, 5.8S and 5S).

It is found in the cytoplasm. The chain is Small ribosomal subunit protein eS1A from Trypanosoma cruzi (strain CL Brener).